The following is an 838-amino-acid chain: G-protein coupled receptor-associated sorting protein 2 (838 aa).

Disordered stretches follow at residues 1–122 (MTGA…GARP), 218–292 (ASNE…SNPF), 349–368 (RFRH…RAQK), and 531–552 (LELS…PSPE). The segment covering 13 to 31 (KPEKKAGEEVIAGPEREND) has biased composition (basic and acidic residues). Positions 220–245 (NESGFWSADETSTASSFWTGEETSVR) are enriched in polar residues. Over residues 255-271 (RSRHRAKHQTNPRSRPR) the composition is skewed to basic residues. Phosphoserine occurs at positions 282 and 284. The segment covering 542 to 552 (SLLQPDQPSPE) has biased composition (polar residues).

Belongs to the GPRASP family. In terms of assembly, interacts with cytoplasmic tails of a variety of G-protein coupled receptors such as muscarinic acetylcholine receptor M1/CHRM1 and calcitonin receptor/CALCR. As to expression, expressed in the brain.

Functionally, may play a role in regulation of a variety of G-protein coupled receptors. This Homo sapiens (Human) protein is G-protein coupled receptor-associated sorting protein 2 (GPRASP2).